The sequence spans 141 residues: Nucleoside diphosphate kinase (141 aa).

6 residues coordinate ATP: lysine 11, phenylalanine 59, arginine 87, threonine 93, arginine 104, and asparagine 114. The active-site Pros-phosphohistidine intermediate is the histidine 117.

Belongs to the NDK family. In terms of assembly, homotetramer. Mg(2+) serves as cofactor.

The protein resides in the cytoplasm. The catalysed reaction is a 2'-deoxyribonucleoside 5'-diphosphate + ATP = a 2'-deoxyribonucleoside 5'-triphosphate + ADP. It carries out the reaction a ribonucleoside 5'-diphosphate + ATP = a ribonucleoside 5'-triphosphate + ADP. Major role in the synthesis of nucleoside triphosphates other than ATP. The ATP gamma phosphate is transferred to the NDP beta phosphate via a ping-pong mechanism, using a phosphorylated active-site intermediate. This chain is Nucleoside diphosphate kinase, found in Ralstonia nicotianae (strain ATCC BAA-1114 / GMI1000) (Ralstonia solanacearum).